The primary structure comprises 237 residues: tRNA(His) guanylyltransferase (237 aa).

Residue Ala-2 is modified to N-acetylalanine. Residues Asp-29 and Gly-30 each contribute to the Mg(2+) site. 5 residues coordinate GTP: Lys-32, Phe-33, His-34, Lys-44, and Asp-47. Asp-77 contributes to the Mg(2+) binding site.

Belongs to the tRNA(His) guanylyltransferase family. In terms of assembly, homotetramer. Mg(2+) serves as cofactor.

The catalysed reaction is a 5'-end ribonucleotide-tRNA(His) + GTP + ATP + H2O = a 5'-end phospho-guanosine-ribonucleotide-tRNA(His) + AMP + 2 diphosphate + H(+). It carries out the reaction a 5'-end ribonucleotide-RNA + a ribonucleoside 5'-triphosphate + ATP + H2O = a 5'-end phospho-ribonucleoside-ribonucleotide-RNA + AMP + 2 diphosphate + H(+). Acts as a tRNA(His) guanylyltransferase that catalyzes 3'-5' addition of a single guanosine residue to the -1 position of tRNA(His), to form a non-Watson-Crick G(-1):A-73 base pair. After addition of G(-1), THG1 removes pyrophosphate from the tRNA 5'-end, generating 5'-monophosphorylated G(-1)-containing tRNA which is important for recognition of tRNA(His) by its cognate histidyl-tRNA synthetase. In addition to the single-G(-1) addition reaction, THG1 polymerizes multiple G residues to the 5'-end of tRNA(His) variants using the 3'-end of the tRNA(His) acceptor stem as a template. The polypeptide is tRNA(His) guanylyltransferase (Saccharomyces cerevisiae (strain ATCC 204508 / S288c) (Baker's yeast)).